The primary structure comprises 351 residues: Circumsporozoite protein (351 aa).

Positions M1–F22 are cleaved as a signal peptide. Residues A50–P266 form a disordered region. The segment covering G61–Q96 has biased composition (basic and acidic residues). A required for the binding to heparan sulfate proteoglycans (HSPGs) on the surface of host hepatocytes region spans residues K80–K88. The interval K93–P97 is region I; contains the proteolytic cleavage site. The span at P97–A219 shows a compositional bias: low complexity. A run of 14 repeats spans residues A101 to P109, A110 to P118, A119 to P127, A128 to P136, A137 to P145, A146 to P154, A155 to P163, A164 to P172, A173 to P181, A182 to P190, A191 to P199, A200 to P208, A209 to P217, and A218 to P226. The tract at residues A101 to P226 is 14 X 9 AA tandem repeats of A-A-G-A-[GR]-G-E-Q-P. Over residues G244–Q256 the composition is skewed to gly residues. In terms of domain architecture, TSP type-1 spans K277–A329. 2 disulfides stabilise this stretch: C289/C323 and C293/C328. Residue T292 is glycosylated (O-linked (Fuc) threonine). A lipid anchor (GPI-anchor amidated cysteine) is attached at C328. Positions A329–N351 are cleaved as a propeptide — removed in mature form.

The protein belongs to the plasmodium circumsporozoite protein family. In terms of processing, during host cell invasion, proteolytically cleaved at the cell membrane in the region I by a papain-like cysteine protease of parasite origin. Cleavage is triggered by the sporozoite contact with highly sulfated heparan sulfate proteoglycans (HSPGs) present on the host hepatocyte cell surface. Cleavage exposes the TSP type-1 (TSR) domain and is required for productive invasion of host hepatocytes but not for adhesion to the host cell membrane. Cleavage is dispensable for sporozoite development in the oocyst, motility and for traversal of host and vector cells. O-glycosylated; maybe by POFUT2.

Its subcellular location is the cell membrane. The protein resides in the cytoplasm. In terms of biological role, essential sporozoite protein. In the mosquito vector, required for sporozoite development in the oocyst, migration through the vector hemolymph and entry into the vector salivary glands. In the vertebrate host, required for sporozoite migration through the host dermis and infection of host hepatocytes. Binds to highly sulfated heparan sulfate proteoglycans (HSPGs) on the surface of host hepatocytes. In the vertebrate host, binds to highly sulfated heparan sulfate proteoglycans (HSPGs) on the surface of host hepatocytes and is required for sporozoite invasion of the host hepatocytes. The polypeptide is Circumsporozoite protein (Plasmodium knowlesi (strain nuri)).